The chain runs to 161 residues: DNA endonuclease I-CvuI (161 aa).

The protein belongs to the LAGLIDADG endonuclease family.

It localises to the plastid. It is found in the chloroplast. Its function is as follows. Probable endonuclease involved in intron homing. The sequence is that of DNA endonuclease I-CvuI from Chlorella vulgaris (Green alga).